The following is a 238-amino-acid chain: Sugar fermentation stimulation protein homolog (238 aa).

This sequence belongs to the SfsA family.

This is Sugar fermentation stimulation protein homolog from Brucella melitensis biotype 1 (strain ATCC 23456 / CCUG 17765 / NCTC 10094 / 16M).